Consider the following 103-residue polypeptide: Large ribosomal subunit protein uL24 (103 aa).

This sequence belongs to the universal ribosomal protein uL24 family. In terms of assembly, part of the 50S ribosomal subunit.

In terms of biological role, one of two assembly initiator proteins, it binds directly to the 5'-end of the 23S rRNA, where it nucleates assembly of the 50S subunit. Functionally, one of the proteins that surrounds the polypeptide exit tunnel on the outside of the subunit. The sequence is that of Large ribosomal subunit protein uL24 from Bacillus mycoides (strain KBAB4) (Bacillus weihenstephanensis).